Reading from the N-terminus, the 352-residue chain is Ion-translocating oxidoreductase complex subunit D (352 aa).

4 helical membrane-spanning segments follow: residues 20–40 (IMLL…WFFG), 42–62 (GTLV…ALVL), 89–109 (IPPL…VIIA), and 123–143 (PAMI…TSWL). An FMN phosphoryl threonine modification is found at Thr187. 5 helical membrane-spanning segments follow: residues 214-234 (ILAG…GVWL), 242-262 (WHVP…GWLF), 267-287 (LAAP…FFIL), 301-321 (LIFG…GGYP), and 322-342 (DGVA…DYYT).

The protein belongs to the NqrB/RnfD family. In terms of assembly, the complex is composed of six subunits: RsxA, RsxB, RsxC, RsxD, RsxE and RsxG. It depends on FMN as a cofactor.

It is found in the cell inner membrane. In terms of biological role, part of a membrane-bound complex that couples electron transfer with translocation of ions across the membrane. Required to maintain the reduced state of SoxR. The chain is Ion-translocating oxidoreductase complex subunit D from Escherichia coli (strain UTI89 / UPEC).